A 234-amino-acid chain; its full sequence is Phosphoribosylformylglycinamidine synthase subunit PurQ (234 aa).

The 229-residue stretch at 6 to 234 (VGVVVFPGSN…ESLFRSLTGV (229 aa)) folds into the Glutamine amidotransferase type-1 domain. Residue cysteine 89 is the Nucleophile of the active site. Catalysis depends on residues histidine 206 and glutamate 208.

Part of the FGAM synthase complex composed of 1 PurL, 1 PurQ and 2 PurS subunits.

Its subcellular location is the cytoplasm. The enzyme catalyses N(2)-formyl-N(1)-(5-phospho-beta-D-ribosyl)glycinamide + L-glutamine + ATP + H2O = 2-formamido-N(1)-(5-O-phospho-beta-D-ribosyl)acetamidine + L-glutamate + ADP + phosphate + H(+). The catalysed reaction is L-glutamine + H2O = L-glutamate + NH4(+). It participates in purine metabolism; IMP biosynthesis via de novo pathway; 5-amino-1-(5-phospho-D-ribosyl)imidazole from N(2)-formyl-N(1)-(5-phospho-D-ribosyl)glycinamide: step 1/2. Part of the phosphoribosylformylglycinamidine synthase complex involved in the purines biosynthetic pathway. Catalyzes the ATP-dependent conversion of formylglycinamide ribonucleotide (FGAR) and glutamine to yield formylglycinamidine ribonucleotide (FGAM) and glutamate. The FGAM synthase complex is composed of three subunits. PurQ produces an ammonia molecule by converting glutamine to glutamate. PurL transfers the ammonia molecule to FGAR to form FGAM in an ATP-dependent manner. PurS interacts with PurQ and PurL and is thought to assist in the transfer of the ammonia molecule from PurQ to PurL. In Chlorobium chlorochromatii (strain CaD3), this protein is Phosphoribosylformylglycinamidine synthase subunit PurQ.